Reading from the N-terminus, the 575-residue chain is SH2B adapter protein 3 (575 aa).

Disordered stretches follow at residues 1-23 (MNGP…AAAP), 83-136 (RAPG…CSFQ), and 150-176 (SAGE…PARP). A Phosphoserine modification is found at serine 13. Residues 83–93 (RAPGRDYRDTG) show a composition bias toward basic and acidic residues. The segment covering 95 to 104 (GPPAKAEASP) has biased composition (low complexity). A phosphoserine mark is found at serine 103, serine 120, and serine 150. Positions 152–174 (GELPAAHTAAAPGTPGEAAETPA) are enriched in low complexity. Positions 194–307 (EALKEAVLRY…WMAELSECTG (114 aa)) constitute a PH domain. The disordered stretch occupies residues 322–346 (ALEPSTSSSPRGSTDSLNQGASPGG). Positions 325-337 (PSTSSSPRGSTDS) are enriched in low complexity. Phosphoserine is present on serine 330. Positions 364–462 (WFHGPISRVK…ACDVRLSSYV (99 aa)) constitute an SH2 domain. Disordered regions lie at residues 503-525 (SSGC…PEQI) and 546-575 (PVNR…YTPL).

Belongs to the SH2B adapter family. As to quaternary structure, binds to the tyrosine-phosphorylated TCR zeta chain via its SH2 domain. Post-translationally, tyrosine phosphorylated by LCK. Preferentially expressed by lymphoid cell lines.

Links T-cell receptor activation signal to phospholipase C-gamma-1, GRB2 and phosphatidylinositol 3-kinase. The polypeptide is SH2B adapter protein 3 (SH2B3) (Homo sapiens (Human)).